Reading from the N-terminus, the 1083-residue chain is Ubiquitin carboxyl-terminal hydrolase 28 (1083 aa).

A disordered region spans residues 60 to 82; that stretch reads DQRVKEPSHDTAATEPSEVEESA. Position 67 is a phosphoserine (Ser67). Positions 97–116 constitute a UIM domain; that stretch reads DNKDDLQAAIALSLLESPNI. Residue Lys99 forms a Glycyl lysine isopeptide (Lys-Gly) (interchain with G-Cter in SUMO2) linkage. The 495-residue stretch at 162-656 folds into the USP domain; that stretch reads VGLKNVGNTC…SAYCLMYIND (495 aa). Residue Cys171 is the Nucleophile of the active site. Ser376 bears the Phosphoserine mark. Positions 483 to 539 are disordered; sequence DLTAKESSSPKSCSQNAEGSFSSPEDALPNSEVMNGPFTSPHSSLEMPAPPPAPRTV. The segment covering 487-505 has biased composition (polar residues); it reads KESSSPKSCSQNAEGSFSS. Ser556 bears the Phosphoserine mark. Residue His606 is the Proton acceptor of the active site. The tract at residues 703–728 is disordered; sequence EEQSCKIPQMESSPNSSSQDFSTSQE. Residues 714-728 show a composition bias toward low complexity; the sequence is SSPNSSSQDFSTSQE. Ser720 carries the post-translational modification Phosphoserine. Thr1054 is modified (phosphothreonine).

Belongs to the peptidase C19 family. USP28 subfamily. As to quaternary structure, interacts with ZNF304. Interacts with PRKD1. Interacts with TP53BP1. Interacts with FBXW7; following DNA damage, dissociates from FBXW7 leading to degradation of MYC. Degraded upon nickel ion level or hypoxia exposure. In terms of processing, phosphorylated upon DNA damage at Ser-67 and Ser-720, by ATM or ATR. Phosphorylated by PRKD1.

It is found in the nucleus. Its subcellular location is the nucleoplasm. The catalysed reaction is Thiol-dependent hydrolysis of ester, thioester, amide, peptide and isopeptide bonds formed by the C-terminal Gly of ubiquitin (a 76-residue protein attached to proteins as an intracellular targeting signal).. In terms of biological role, deubiquitinase involved in DNA damage response checkpoint and MYC proto-oncogene stability. Involved in DNA damage induced apoptosis by specifically deubiquitinating proteins of the DNA damage pathway such as CLSPN. Also involved in G2 DNA damage checkpoint, by deubiquitinating CLSPN, and preventing its degradation by the anaphase promoting complex/cyclosome (APC/C). In contrast, it does not deubiquitinate PLK1. Specifically deubiquitinates MYC in the nucleoplasm, leading to prevent MYC degradation by the proteasome: acts by specifically interacting with FBXW7 (FBW7alpha) in the nucleoplasm and counteracting ubiquitination of MYC by the SCF(FBXW7) complex. Deubiquitinates ZNF304, hence preventing ZNF304 degradation by the proteasome and leading to the activated KRAS-mediated promoter hypermethylation and transcriptional silencing of tumor suppressor genes (TSGs) in a subset of colorectal cancers (CRC) cells. This chain is Ubiquitin carboxyl-terminal hydrolase 28 (Usp28), found in Rattus norvegicus (Rat).